A 254-amino-acid polypeptide reads, in one-letter code: Pimeloyl-[acyl-carrier protein] methyl ester esterase (254 aa).

The AB hydrolase-1 domain occupies 16–241 (LVLLHGWGMN…QSSHAPFMTE (226 aa)). Substrate is bound by residues Trp-22, 82-83 (SL), and 143-147 (FMALQ). Catalysis depends on Ser-82, which acts as the Nucleophile. Catalysis depends on residues Asp-207 and His-235. Position 235 (His-235) interacts with substrate.

Belongs to the AB hydrolase superfamily. Carboxylesterase BioH family. As to quaternary structure, monomer.

It localises to the cytoplasm. It carries out the reaction 6-carboxyhexanoyl-[ACP] methyl ester + H2O = 6-carboxyhexanoyl-[ACP] + methanol + H(+). Its pathway is cofactor biosynthesis; biotin biosynthesis. Its function is as follows. The physiological role of BioH is to remove the methyl group introduced by BioC when the pimeloyl moiety is complete. It allows to synthesize pimeloyl-ACP via the fatty acid synthetic pathway through the hydrolysis of the ester bonds of pimeloyl-ACP esters. The sequence is that of Pimeloyl-[acyl-carrier protein] methyl ester esterase from Vibrio campbellii (strain ATCC BAA-1116).